The primary structure comprises 229 residues: Casparian strip membrane protein 1 (229 aa).

Residues M1–C67 are Cytoplasmic-facing. The chain crosses the membrane as a helical span at residues V68–I88. At A89–A115 the chain is on the extracellular side. The helical transmembrane segment at L116–F136 threads the bilayer. The Cytoplasmic segment spans residues S137–D157. The helical transmembrane segment at M158–A178 threads the bilayer. Topologically, residues H179–V205 are extracellular. Residues V206 to I226 traverse the membrane as a helical segment. Residues R227–R229 are Cytoplasmic-facing.

The protein belongs to the Casparian strip membrane proteins (CASP) family. Homodimer and heterodimers.

The protein localises to the cell membrane. Regulates membrane-cell wall junctions and localized cell wall deposition. Required for establishment of the Casparian strip membrane domain (CSD) and the subsequent formation of Casparian strips, a cell wall modification of the root endodermis that determines an apoplastic barrier between the intraorganismal apoplasm and the extraorganismal apoplasm and prevents lateral diffusion. The sequence is that of Casparian strip membrane protein 1 from Sorghum bicolor (Sorghum).